The following is a 285-amino-acid chain: Nudix hydrolase 15, mitochondrial (285 aa).

A mitochondrion-targeting transit peptide spans 1 to 23 (MFLLYRRLPSFARTTTTTLLCKS). At M24 the chain carries N-acetylmethionine. 2 disordered regions span residues 51–72 (RQYK…TDQE) and 129–152 (THSG…GMTA). Positions 99–255 (PKRAAVLICL…DKDYMIWGLT (157 aa)) constitute a Nudix hydrolase domain. The Nudix box signature appears at 140–161 (KAEEDDKDDGMTATREAEEEIG). The Mg(2+) site is built by E155 and E159.

This sequence belongs to the Nudix hydrolase family. Requires Mg(2+) as cofactor. It depends on Mn(2+) as a cofactor. As to expression, expressed in roots, leaves, stems and inflorescences.

The protein localises to the mitochondrion. Its function is as follows. Coenzyme A diphosphatase which mediates the cleavage of oxidized CoA. Can use malonyl-CoA, hexanoyl-CoA, lauroyl-CoA, myristoyl-CoA and palmitoyl-CoA as substrates, but not isobutyryl-CoA or propionyl-CoA. The protein is Nudix hydrolase 15, mitochondrial (NUDT15) of Arabidopsis thaliana (Mouse-ear cress).